A 370-amino-acid chain; its full sequence is Sensor histidine kinase DesK (370 aa).

At 1-10 the chain is on the extracellular side; that stretch reads MIKNHFTFQK. The chain crosses the membrane as a helical span at residues 11–31; that stretch reads LNGITPYIWTIFFILPFYFIW. Residues 32 to 36 lie on the Cytoplasmic side of the membrane; sequence KSSST. A helical transmembrane segment spans residues 37–57; the sequence is FVIIVGIILTLLFFSVYRFAF. The Extracellular portion of the chain corresponds to 58-70; it reads VSKGWTIYLWGFL. A helical transmembrane segment spans residues 71-91; that stretch reads LIGISTASITLFSYIYFAFFI. The Cytoplasmic portion of the chain corresponds to 92–103; sequence AYFIGNIKERVP. Residues 104 to 124 traverse the membrane as a helical segment; the sequence is FHILYYVHLISAAVAANFSLV. The Extracellular portion of the chain corresponds to 125-128; it reads LKKE. A helical transmembrane segment spans residues 129–149; it reads FFLTQIPFVVITLISAILLPF. Over 150-370 the chain is Cytoplasmic; that stretch reads SIKSRKERER…LTMAIPNNSK (221 aa). The Histidine kinase domain occupies 186–369; it reads DLHDTLGQKL…KLTMAIPNNS (184 aa). At H188 the chain carries Phosphohistidine; by autocatalysis.

Its subcellular location is the cell membrane. The enzyme catalyses ATP + protein L-histidine = ADP + protein N-phospho-L-histidine.. Member of the two-component regulatory system DesR/DesK, responsible for cold induction of the des gene coding for the Delta5 acyl-lipid desaturase. Acts as a sensor of the membrane fluidity. Probably activates DesR by phosphorylation. This is Sensor histidine kinase DesK (desK) from Bacillus subtilis (strain 168).